We begin with the raw amino-acid sequence, 643 residues long: Transmembrane 9 superfamily member 4 (643 aa).

The first 23 residues, 1-23 (MAAAMIWWPRFLLLLCLTCKGST), serve as a signal peptide directing secretion. At 24-282 (FYVPGVAPIN…TMSDVQIHWF (259 aa)) the chain is on the extracellular side. The chain crosses the membrane as a helical span at residues 283–303 (SIINSVVVVFFLSGILSMIII). Residues 304 to 347 (RTLRKDIANYNKEDDIEDTMEESGWKLVHGDVFRPPQYPMILSS) are Cytoplasmic-facing. A Phosphotyrosine modification is found at tyrosine 313. A helical transmembrane segment spans residues 348 to 368 (LLGSGIQLFCMILIVIFVAML). Over 369–377 (GMLSPSSRG) the chain is Extracellular. A helical membrane pass occupies residues 378–398 (ALMTTACFLFMFMGVFGGFSA). Residues 399 to 417 (GRLYRTLKGHRWKKGAFCT) are Cytoplasmic-facing. The helical transmembrane segment at 418-438 (ATLYPGVVFGICFVLNCFIWG) threads the bilayer. Topologically, residues 439-450 (KHSSGAVPFPTM) are extracellular. Residues 451-471 (VALLCMWFGISLPLVYLGYYF) form a helical membrane-spanning segment. The Cytoplasmic segment spans residues 472-502 (GFRKQPYDNPVRTNQIPRQIPEQRWYMNRFV). The helical transmembrane segment at 503 to 523 (GILMAGILPFGAMFIELFFIF) threads the bilayer. Residues 524–536 (SAIWENQFYYLFG) are Extracellular-facing. A helical membrane pass occupies residues 537-557 (FLFLVFIILVVSCSQISIVMV). Topologically, residues 558–571 (YFQLCAEDYRWWWR) are cytoplasmic. A helical membrane pass occupies residues 572–592 (NFLVSGGSAFYVLVYAIFYFV). Topologically, residues 593 to 599 (NKLDIVE) are extracellular. Residues 600-620 (FIPSLLYFGYTTLMVLSFWLL) form a helical membrane-spanning segment. The Cytoplasmic portion of the chain corresponds to 621 to 643 (TGTIGFYAAYMFVRKIYAAVKID).

Belongs to the nonaspanin (TM9SF) (TC 9.A.2) family.

The protein resides in the membrane. The protein localises to the golgi apparatus. Its subcellular location is the early endosome. Associates with proteins harboring glycine-rich transmembrane domains and ensures their efficient localization to the cell surface. This is Transmembrane 9 superfamily member 4 (Tm9sf4) from Rattus norvegicus (Rat).